Here is a 125-residue protein sequence, read N- to C-terminus: Large ribosomal subunit protein bL20 (125 aa).

The protein belongs to the bacterial ribosomal protein bL20 family.

Its function is as follows. Binds directly to 23S ribosomal RNA and is necessary for the in vitro assembly process of the 50S ribosomal subunit. It is not involved in the protein synthesizing functions of that subunit. This Zymomonas mobilis subsp. mobilis (strain ATCC 31821 / ZM4 / CP4) protein is Large ribosomal subunit protein bL20.